The chain runs to 59 residues: uncharacterized protein (59 aa).

The N-terminal stretch at 1 to 17 is a signal peptide; it reads MIASIWYAELGCASAIA.

This is an uncharacterized protein from Rickettsia prowazekii (strain Madrid E).